We begin with the raw amino-acid sequence, 220 residues long: Methylamine utilization ferredoxin-type protein MauM (220 aa).

2 consecutive 4Fe-4S ferredoxin-type domains span residues 50-80 (ALPE…LAEM) and 88-120 (TPFF…RDIP). The [4Fe-4S] cluster site is built by cysteine 60, cysteine 63, cysteine 66, cysteine 70, cysteine 98, cysteine 101, cysteine 106, cysteine 110, cysteine 138, cysteine 146, cysteine 149, cysteine 153, cysteine 182, cysteine 185, cysteine 188, and cysteine 192. The 4Fe-4S ferredoxin-type 3 domain occupies 173-204 (VIPTVHSDKCTGCGTCEKHCVLGQAAIRVLPR).

It participates in one-carbon metabolism; methylamine degradation. Its function is as follows. Involved in electron transfer. The chain is Methylamine utilization ferredoxin-type protein MauM (mauM) from Methylorubrum extorquens (strain ATCC 14718 / DSM 1338 / JCM 2805 / NCIMB 9133 / AM1) (Methylobacterium extorquens).